The chain runs to 1733 residues: Gag-Pol polyprotein (1733 aa).

Glycine 2 carries the N-myristoyl glycine; by host lipid modification. Residues 109–112 (PSAP) carry the PTAP/PSAP motif motif. The span at 112 to 121 (PSLLPEPPLS) shows a compositional bias: pro residues. 2 disordered regions span residues 112 to 196 (PSLL…ASRL) and 202 to 221 (LPVA…GGNG). An LYPX(n)L motif motif is present at residues 128–132 (LYPAL). Over residues 159–170 (DPPPYRDPGPPP) the composition is skewed to pro residues. The PPXY motif signature appears at 160 to 163 (PPPY). Serine 190 carries the post-translational modification Phosphoserine; by host. The interval 343–391 (GRSPTNLAKVKGITQGPNESPSAFLERLKEAYRRYTPYDPEDPGQETNV) is interaction with host PIAS4. An interaction with host UBE2I region spans residues 428-433 (IFNKRE). 2 stretches are compositionally biased toward basic and acidic residues: residues 432–464 (RETP…EKER) and 484–496 (KQDR…RRPQ). 2 disordered regions span residues 432 to 496 (RETP…RRPQ) and 511 to 550 (WAKD…EPRI). Positions 436-476 (EEREERIKRETEEKEERRRAEDEQKEKERDRRRHREMSKLL) form a coiled coil. Residues 500-517 (DQCAYCKEKGHWAKDCPK) form a CCHC-type zinc finger. Residues 559–629 (VTFLVDTGAQ…CPYPLLGRDL (71 aa)) form the Peptidase A2 domain. Residue aspartate 564 is the Protease; shared with dimeric partner of the active site. One can recognise a Reverse transcriptase domain in the interval 739-930 (LDQGILVPCQ…KQVKYLGYLL (192 aa)). Residues aspartate 807, aspartate 881, aspartate 882, aspartate 1181, glutamate 1219, aspartate 1240, and aspartate 1310 each contribute to the Mg(2+) site. An RNase H type-1 domain is found at 1172–1318 (PDADHTWYTD…ADQAAREVAT (147 aa)). The segment at 1385–1425 (HQLTHLSFSKTKALLERSPSPYYMLNRDRTLKNITETCKAC) adopts an HHCC-type zinc-finger fold. Positions 1442–1600 (RGHRPGTHWE…TPYEILYGAP (159 aa)) constitute an Integrase catalytic domain. Aspartate 1453 and aspartate 1512 together coordinate Mg(2+).

Homohexamer; further associates as homomultimer. The virus core is composed of a lattice formed from hexagonal rings, each containing six capsid monomers. Interacts with mouse UBE2I and mouse PIAS4. In terms of assembly, interacts (via PPXY motif) with host NEDD4. Interacts (via PSAP motif) with host TSG101. Interacts (via LYPX(n)L motif) with host PDCD6IP. As to quaternary structure, the reverse transcriptase is a monomer (Potential). Interacts (via RNase domains) with host release factor ETF1; this interaction is essential for translational readthrough of amber codon between viral gag and pol genes, as well as for viral replication. Homodimer. Mg(2+) is required as a cofactor. Ubiquitinated by ITCH. Gag can recruit the ubiquitin ligase Itch in an L domain-independent manner to facilitate virus release via a mechanism that involves Gag ubiquitination. In terms of processing, specific enzymatic cleavages by the viral protease yield mature proteins. The protease is released by autocatalytic cleavage. The polyprotein is cleaved during and after budding, this process is termed maturation. Post-translationally, sumoylated; which is required for virus replication. Phosphorylated on serine residues.

It localises to the virion. The protein localises to the host cell membrane. Its subcellular location is the host late endosome membrane. It is found in the host endosome. The protein resides in the host multivesicular body. It localises to the host cytoplasm. The catalysed reaction is DNA(n) + a 2'-deoxyribonucleoside 5'-triphosphate = DNA(n+1) + diphosphate. The enzyme catalyses Endonucleolytic cleavage to 5'-phosphomonoester.. Most efficiently inhibited by Amprenavir, which is able to block Gag-Pol processing in infected cells. In terms of biological role, plays a role in budding and is processed by the viral protease during virion maturation outside the cell. During budding, it recruits, in a PPXY-dependent or independent manner, Nedd4-like ubiquitin ligases that conjugate ubiquitin molecules to Gag-Pol, or to Gag-Pol binding host factors. Interaction with HECT ubiquitin ligases probably links the viral protein to the host ESCRT pathway and facilitates release. Functionally, targets Gag and gag-pol polyproteins to the plasma membrane via a multipartite membrane binding signal, that includes its myristoylated N-terminus. Also mediates nuclear localization of the pre-integration complex. Constituent of the pre-integration complex (PIC) which tethers the latter to mitotic chromosomes. This allows the integration of the viral genome into the host DNA. Its function is as follows. Forms the spherical core of the virion that encapsulates the genomic RNA-nucleocapsid complex. In terms of biological role, involved in the packaging and encapsidation of two copies of the genome. Binds with high affinity to conserved UCUG elements within the packaging signal, located near the 5'-end of the genome. This binding is dependent on genome dimerization. Acts as a nucleic acid chaperone which is involved in rearrangement of nucleic acid secondary structures during gRNA retrotranscription. Functionally, the aspartyl protease mediates proteolytic cleavages of Gag and Gag-Pol polyproteins during or shortly after the release of the virion from the plasma membrane. Cleavages take place as an ordered, step-wise cascade to yield mature proteins. This process is called maturation. Displays maximal activity during the budding process just prior to particle release from the cell (Potential). Cleaves the translation initiation factor eIF4G leading to the inhibition of host cap-dependent translation. RT is a multifunctional enzyme that converts the viral dimeric RNA genome into dsDNA in the cytoplasm, shortly after virus entry into the cell. This enzyme displays a DNA polymerase activity that can copy either DNA or RNA templates, and a ribonuclease H (RNase H) activity that cleaves the RNA strand of RNA-DNA heteroduplexes in a partially processive 3' to 5' endonucleasic mode. Conversion of viral genomic RNA into dsDNA requires many steps. A tRNA binds to the primer-binding site (PBS) situated at the 5' end of the viral RNA. RT uses the 3' end of the tRNA primer to perform a short round of RNA-dependent minus-strand DNA synthesis. The reading proceeds through the U5 region and ends after the repeated (R) region which is present at both ends of viral RNA. The portion of the RNA-DNA heteroduplex is digested by the RNase H, resulting in a ssDNA product attached to the tRNA primer. This ssDNA/tRNA hybridizes with the identical R region situated at the 3' end of viral RNA. This template exchange, known as minus-strand DNA strong stop transfer, can be either intra- or intermolecular. RT uses the 3' end of this newly synthesized short ssDNA to perform the RNA-dependent minus-strand DNA synthesis of the whole template. RNase H digests the RNA template except for a polypurine tract (PPT) situated at the 5' end of the genome. It is not clear if both polymerase and RNase H activities are simultaneous. RNase H probably can proceed both in a polymerase-dependent (RNA cut into small fragments by the same RT performing DNA synthesis) and a polymerase-independent mode (cleavage of remaining RNA fragments by free RTs). Secondly, RT performs DNA-directed plus-strand DNA synthesis using the PPT that has not been removed by RNase H as primers. PPT and tRNA primers are then removed by RNase H. The 3' and 5' ssDNA PBS regions hybridize to form a circular dsDNA intermediate. Strand displacement synthesis by RT to the PBS and PPT ends produces a blunt ended, linear dsDNA copy of the viral genome that includes long terminal repeats (LTRs) at both ends. Its function is as follows. Catalyzes viral DNA integration into the host chromosome, by performing a series of DNA cutting and joining reactions. This enzyme activity takes place after virion entry into a cell and reverse transcription of the RNA genome in dsDNA. The first step in the integration process is 3' processing. This step requires a complex comprising the viral genome, matrix protein and integrase. This complex is called the pre-integration complex (PIC). The integrase protein removes 2 nucleotides from each 3' end of the viral DNA, leaving recessed CA OH's at the 3' ends. In the second step that requires cell division, the PIC enters cell nucleus. In the third step, termed strand transfer, the integrase protein joins the previously processed 3' ends to the 5' ends of strands of target cellular DNA at the site of integration. The last step is viral DNA integration into host chromosome. The sequence is that of Gag-Pol polyprotein (gag-pol) from Cas-Br-E murine leukemia virus.